The sequence spans 252 residues: Trans-aconitate 2-methyltransferase (252 aa).

It belongs to the methyltransferase superfamily. Tam family.

The protein resides in the cytoplasm. It catalyses the reaction trans-aconitate + S-adenosyl-L-methionine = (E)-3-(methoxycarbonyl)pent-2-enedioate + S-adenosyl-L-homocysteine. Functionally, catalyzes the S-adenosylmethionine monomethyl esterification of trans-aconitate. This Shigella dysenteriae serotype 1 (strain Sd197) protein is Trans-aconitate 2-methyltransferase.